Consider the following 545-residue polypeptide: MELKERNFKKIGLICVAVLLCGMVFSYGIFPSILRFMIKQNVLLKPGTQIRDMFEKIPFPLDFKLHIFNVTNPDEIMRGGKPRVNDIGPLYFEEWKEKYDTVDNVEEDTLTFTLRNTWIFRPDLSALTGEEIVTIPHPLIMGVLLMVQRDREAMMPLVKKGVNILFDPLESAFLKVRIMDLLFDGIYVDCSSQDFAAKALCSGMDSEGAVMPHNETHYKFSFFGMRNHTEAGRWVVYRGVKNIRDLGRVVSYNEETEMDIWDGDECNQYIGTDSTIFPPFLTAQDRLWAWSPEICRSLGAHYVHKSKYAGLPMSYFELDFGDLKNEPHNHCFCRDAPDDCPPKGTMDLSPCLGGPIIGSKPHFYGADPKLVEAVDGLAPNKAAHDVYIHFELASICWFTGSPVSAAKRLQFSMELGPIRDHELFGQLPDVILPMFWAEEGASLNKTWTNQLKYQLFLGLKFNATVKWLTIIIGTVGAVGSAYMYFRKETKTTDVAPVDVSTPDTNPSSAKDGVVNVSLGRNLPPVIDGLDKPPKLRATELQQERY.

At 1–10 (MELKERNFKK) the chain is on the cytoplasmic side. Residues 11–31 (IGLICVAVLLCGMVFSYGIFP) traverse the membrane as a helical segment. At 32–464 (SILRFMIKQN…LFLGLKFNAT (433 aa)) the chain is on the extracellular side. Asn69, Asn214, and Asn227 each carry an N-linked (GlcNAc...) asparagine glycan. 3 disulfides stabilise this stretch: Cys266-Cys331, Cys295-Cys351, and Cys333-Cys340. Asn444 and Asn462 each carry an N-linked (GlcNAc...) asparagine glycan. The chain crosses the membrane as a helical span at residues 465-485 (VKWLTIIIGTVGAVGSAYMYF). Residues 486 to 545 (RKETKTTDVAPVDVSTPDTNPSSAKDGVVNVSLGRNLPPVIDGLDKPPKLRATELQQERY) are Cytoplasmic-facing.

Belongs to the CD36 family. Selectively expressed in antenna.

The protein localises to the cell membrane. Functionally, plays an olfactory role that is not restricted to pheromone sensitivity. This chain is Sensory neuron membrane protein 1 (snmp1), found in Anopheles gambiae (African malaria mosquito).